An 840-amino-acid polypeptide reads, in one-letter code: Protein translocase subunit SecA (840 aa).

Residues glutamine 87, 105-109 (GEGKT), and aspartate 494 contribute to the ATP site. The interval 518 to 537 (RRIDNQLRGRSGRQGDPGSS) is disordered. Residues cysteine 826, cysteine 828, cysteine 837, and cysteine 838 each coordinate Zn(2+).

Belongs to the SecA family. As to quaternary structure, monomer and homodimer. Part of the essential Sec protein translocation apparatus which comprises SecA, SecYEG and auxiliary proteins SecDF-YajC and YidC. Zn(2+) is required as a cofactor.

Its subcellular location is the cell inner membrane. It is found in the cytoplasm. It catalyses the reaction ATP + H2O + cellular proteinSide 1 = ADP + phosphate + cellular proteinSide 2.. Its function is as follows. Part of the Sec protein translocase complex. Interacts with the SecYEG preprotein conducting channel. Has a central role in coupling the hydrolysis of ATP to the transfer of proteins into and across the cell membrane, serving as an ATP-driven molecular motor driving the stepwise translocation of polypeptide chains across the membrane. This Desulforapulum autotrophicum (strain ATCC 43914 / DSM 3382 / VKM B-1955 / HRM2) (Desulfobacterium autotrophicum) protein is Protein translocase subunit SecA.